The chain runs to 172 residues: uncharacterized protein (172 aa).

In terms of domain architecture, PfpI endopeptidase spans 3–171; the sequence is KKVAIILTNE…FNREIVNQLN (169 aa).

Belongs to the peptidase C56 family.

This is an uncharacterized protein from Staphylococcus saprophyticus subsp. saprophyticus (strain ATCC 15305 / DSM 20229 / NCIMB 8711 / NCTC 7292 / S-41).